A 199-amino-acid chain; its full sequence is Probable nicotinate-nucleotide adenylyltransferase (199 aa).

It belongs to the NadD family.

The enzyme catalyses nicotinate beta-D-ribonucleotide + ATP + H(+) = deamido-NAD(+) + diphosphate. It participates in cofactor biosynthesis; NAD(+) biosynthesis; deamido-NAD(+) from nicotinate D-ribonucleotide: step 1/1. In terms of biological role, catalyzes the reversible adenylation of nicotinate mononucleotide (NaMN) to nicotinic acid adenine dinucleotide (NaAD). This Corynebacterium jeikeium (strain K411) protein is Probable nicotinate-nucleotide adenylyltransferase.